Reading from the N-terminus, the 255-residue chain is Acetyl-coenzyme A carboxylase carboxyl transferase subunit alpha (255 aa).

Positions 1 to 235 constitute a CoA carboxyltransferase C-terminal domain; the sequence is MNIAKIVREA…KKELQTELAR (235 aa).

It belongs to the AccA family. As to quaternary structure, acetyl-CoA carboxylase is a heterohexamer composed of biotin carboxyl carrier protein (AccB), biotin carboxylase (AccC) and two subunits each of ACCase subunit alpha (AccA) and ACCase subunit beta (AccD).

It is found in the cytoplasm. It carries out the reaction N(6)-carboxybiotinyl-L-lysyl-[protein] + acetyl-CoA = N(6)-biotinyl-L-lysyl-[protein] + malonyl-CoA. Its pathway is lipid metabolism; malonyl-CoA biosynthesis; malonyl-CoA from acetyl-CoA: step 1/1. Functionally, component of the acetyl coenzyme A carboxylase (ACC) complex. First, biotin carboxylase catalyzes the carboxylation of biotin on its carrier protein (BCCP) and then the CO(2) group is transferred by the carboxyltransferase to acetyl-CoA to form malonyl-CoA. In Streptococcus pneumoniae serotype 2 (strain D39 / NCTC 7466), this protein is Acetyl-coenzyme A carboxylase carboxyl transferase subunit alpha.